Reading from the N-terminus, the 198-residue chain is Charged multivesicular body protein 2a homolog 2 (198 aa).

A coiled-coil region spans residues 11-42 (KEVLRENQRNLNKSMREIDRERVALQNQEKKI).

The protein belongs to the SNF7 family. Probable core component of the endosomal sorting required for transport complex III (ESCRT-III). ESCRT-III components are thought to multimerize to form a flat lattice on the perimeter membrane of the endosome.

Its subcellular location is the endosome membrane. Probable core component of the endosomal sorting required for transport complex III (ESCRT-III) which is involved in multivesicular bodies (MVBs) formation and sorting of endosomal cargo proteins into MVBs. MVBs contain intraluminal vesicles (ILVs) that are generated by invagination and scission from the limiting membrane of the endosome and are delivered to lysosomes enabling degradation of membrane proteins. This chain is Charged multivesicular body protein 2a homolog 2 (chmp2a2), found in Dictyostelium discoideum (Social amoeba).